The sequence spans 530 residues: Purine-cytosine permease FCY22 (530 aa).

Residue threonine 46 is modified to Phosphothreonine. 12 helical membrane-spanning segments follow: residues 96 to 116 (MVIV…LNFG), 119 to 139 (VLVI…FSLF), 162 to 182 (FFSL…ISVS), 197 to 217 (CPIW…TFFG), 220 to 240 (VVHA…LVII), 263 to 283 (GVLS…TYAA), 298 to 318 (IFFS…ILGA), 345 to 365 (AILV…LLAL), 372 to 392 (VPGM…LAKI), 396 to 416 (VWTM…TYYF), 418 to 438 (GFME…IAIA), and 463 to 483 (LPIG…VALG).

The protein belongs to the purine-cytosine permease (2.A.39) family.

It localises to the membrane. In terms of biological role, probable purine-cytosine permease. This Saccharomyces cerevisiae (strain ATCC 204508 / S288c) (Baker's yeast) protein is Purine-cytosine permease FCY22 (FCY22).